We begin with the raw amino-acid sequence, 117 residues long: Large ribosomal subunit protein uL18 (117 aa).

It belongs to the universal ribosomal protein uL18 family. Part of the 50S ribosomal subunit; part of the 5S rRNA/L5/L18/L25 subcomplex. Contacts the 5S and 23S rRNAs.

Functionally, this is one of the proteins that bind and probably mediate the attachment of the 5S RNA into the large ribosomal subunit, where it forms part of the central protuberance. This is Large ribosomal subunit protein uL18 from Nitrosococcus oceani (strain ATCC 19707 / BCRC 17464 / JCM 30415 / NCIMB 11848 / C-107).